The primary structure comprises 320 residues: Putative S-adenosyl-L-methionine-dependent methyltransferase MAP_4078 (320 aa).

S-adenosyl-L-methionine is bound by residues aspartate 132 and 161-162; that span reads DL. Residues 294–320 are disordered; the sequence is PPHDIEDAIPQTRFVAAQRTERTRPDR.

It belongs to the UPF0677 family.

Exhibits S-adenosyl-L-methionine-dependent methyltransferase activity. This Mycolicibacterium paratuberculosis (strain ATCC BAA-968 / K-10) (Mycobacterium paratuberculosis) protein is Putative S-adenosyl-L-methionine-dependent methyltransferase MAP_4078.